We begin with the raw amino-acid sequence, 1311 residues long: Nephrocystin-3 (1311 aa).

Residues 81–183 are a coiled coil; that stretch reads SKNNEIASMQ…LQRLQAQGIQ (103 aa). TPR repeat units follow at residues 889 to 923, 927 to 960, 969 to 1002, 1011 to 1044, 1077 to 1110, 1119 to 1152, 1161 to 1194, 1203 to 1236, and 1245 to 1278; these read LSYW…EEKM, ADLY…RETA, AQSL…SENA, AREL…RQKS, ARTL…RERV, AQSI…RRRA, AYTV…RQKS, ATAL…YEDS, and GETL…KETE.

It is found in the cell projection. Its subcellular location is the cilium. Functionally, required for normal ciliary development and function. Inhibits disheveled-1-induced canonical Wnt-signaling activity and may also play a role in the control of non-canonical Wnt signaling that regulates planar cell polarity. Probably acts as a molecular switch between different Wnt signaling pathways. Required for proper convergent extension cell movements. The sequence is that of Nephrocystin-3 (nphp3) from Xenopus tropicalis (Western clawed frog).